The sequence spans 515 residues: MDEFHRYGKEDSSWQQCFLYPLFFQEDLYAISHDHYLDGSSSSEPMEHLSSNDQFSFLTVKRLIGQIRQQNHSIVLFVNCDPNPLVDRKKSSYSESVLEGLTLVLEVPFSIRSKYSVEGMNEWKSFRSIHSIFPFLEDKFPHSNYVSDTRIPYSIHPEILVRTFRRWIGDAPSLHPLRSILYEYRNSSESLQRSIIVVPKVNTRFFLFLWNNYVYECESILVSLLKRSSHSRSLSHGSFPQRTHFHRKIKNIFLFSRRNSFQSIWSLKDPNIHYVRYGERSIIAIKGTHLLVKKYRYYLPIFRQCYFHLWNEPYRVCFHQLSKNCSSSLGYFLRVRMKPLLVKTKMLDELFIADLITDEFDPIVPIVPIIGLLSREKFCDISGRPISKLSWTSLTDDDILDRFDRIWRNLFHYYSGSFGRDGLYRIKYILSLSCAKTLACKHKSTIRVVRKELGPELFKKSFSKERELDSPPFSSKAAARSQRERIWHSDIPQINPLAHSWQKIQDLKIENLFDQ.

Belongs to the intron maturase 2 family. MatK subfamily.

The protein resides in the plastid. The protein localises to the chloroplast. Its function is as follows. Usually encoded in the trnK tRNA gene intron. Probably assists in splicing its own and other chloroplast group II introns. This Picea abies (Norway spruce) protein is Maturase K.